The following is a 448-amino-acid chain: Exodeoxyribonuclease 7 large subunit (448 aa).

The protein belongs to the XseA family. In terms of assembly, heterooligomer composed of large and small subunits.

Its subcellular location is the cytoplasm. The catalysed reaction is Exonucleolytic cleavage in either 5'- to 3'- or 3'- to 5'-direction to yield nucleoside 5'-phosphates.. Bidirectionally degrades single-stranded DNA into large acid-insoluble oligonucleotides, which are then degraded further into small acid-soluble oligonucleotides. The protein is Exodeoxyribonuclease 7 large subunit of Histophilus somni (strain 129Pt) (Haemophilus somnus).